Here is a 145-residue protein sequence, read N- to C-terminus: Lysozyme-like protein 4 (145 aa).

An N-terminal signal peptide occupies residues 1–19 (MQLYLVLLLISYLLTPIGA). The C-type lysozyme domain occupies 20–145 (SILGRCTVAK…LDRWLDGCDL (126 aa)). 4 cysteine pairs are disulfide-bonded: cysteine 25–cysteine 143, cysteine 49–cysteine 130, cysteine 84–cysteine 95, and cysteine 91–cysteine 109. Residue glutamate 54 is part of the active site.

This sequence belongs to the glycosyl hydrolase 22 family. Monomer. In terms of tissue distribution, expressed strongly in testis and in epididymis, and weakly in brain and lung. Detected in sperm (at protein level).

It localises to the secreted. The protein localises to the cytoplasmic vesicle. It is found in the secretory vesicle. The protein resides in the acrosome. Its subcellular location is the cell projection. It localises to the cilium. The protein localises to the flagellum. Its function is as follows. May be involved in fertilization. Has no detectable bacteriolytic in vitro. Has no lysozyme activity in vitro. This is Lysozyme-like protein 4 (Lyzl4) from Mus musculus (Mouse).